We begin with the raw amino-acid sequence, 142 residues long: HTH-type transcriptional regulator MntR (142 aa).

In terms of domain architecture, HTH dtxR-type spans 1 to 63; sequence MPTPSMEDYI…YEKYRGLVLT (63 aa). Residues aspartate 8, glutamate 11, histidine 77, glutamate 99, glutamate 102, and histidine 103 each contribute to the Mn(2+) site.

Belongs to the DtxR/MntR family. In terms of assembly, homodimer.

It is found in the cytoplasm. DNA binding is strongly activated by Mn(2+). Its function is as follows. Central regulator of manganese homeostasis. The chain is HTH-type transcriptional regulator MntR from Bacillus cereus (strain B4264).